Consider the following 144-residue polypeptide: Large ribosomal subunit protein uL16 (144 aa).

The protein belongs to the universal ribosomal protein uL16 family. In terms of assembly, part of the 50S ribosomal subunit.

Its function is as follows. Binds 23S rRNA and is also seen to make contacts with the A and possibly P site tRNAs. The polypeptide is Large ribosomal subunit protein uL16 (Halothermothrix orenii (strain H 168 / OCM 544 / DSM 9562)).